The following is an 816-amino-acid chain: H(+)/Cl(-) exchange transporter 5 (816 aa).

The interval 1–26 (MAMWQGAMDNRGFQQGSFSSFQNSSS) is disordered. Residues 1-124 (MAMWQGAMDN…WALIHSVSDA (124 aa)) lie on the Cytoplasmic side of the membrane. Positions 12 to 25 (GFQQGSFSSFQNSS) are enriched in low complexity. 2 consecutive transmembrane segments (helical) span residues 125-162 (FSGW…ICTG) and 208-231 (VNYF…VKVF). The Selectivity filter part_1 motif lies at 237–241 (GSGIP). Chloride is bound at residue S238. An intramembrane region (helical) is located at residues 240 to 247 (IPEIKTIL). 2 consecutive transmembrane segments (helical) span residues 256–275 (LGKW…VSSG) and 281–300 (EGPL…HCFN). The Selectivity filter part_2 signature appears at 279-283 (GKEGP). 2 intramembrane regions (helical) span residues 312–324 (VLSA…VSVA) and 328–336 (PIGGVLFSL). 5 consecutive transmembrane segments (helical) span residues 348 to 366 (LWRS…RSIN), 389 to 415 (LVPF…AWCR), 422 to 442 (LGKY…ILAF), 498 to 518 (MWQL…TFGM), and 523 to 542 (GLFI…LGVG). The short motif at 523 to 527 (GLFIP) is the Selectivity filter part_3 element. F525 contributes to the chloride binding site. The helical intramembrane region spans 570-584 (GLYAMVGAAACLGGV). The note=Loop between two helices intramembrane region spans 585 to 587 (TRM). Positions 588–599 (TVSLVVIMFELT) form an intramembrane region, helical. Residues 600–604 (GGLEY) constitute an intramembrane region (note=Loop between two helices). A helical transmembrane segment spans residues 605–622 (IVPLMAAAMTSKWVADAL). Over 623–816 (GREGIYDAHI…NQDPDSILFN (194 aa)) the chain is Cytoplasmic. Y628 lines the chloride pocket. 2 consecutive CBS domains span residues 656 to 720 (MKPR…ARKK) and 752 to 812 (ILDL…DPDS). ATP-binding positions include T666, 687-689 (YSG), and 794-797 (TKKD).

The protein belongs to the chloride channel (TC 2.A.49) family. ClC-5/CLCN5 subfamily. In terms of assembly, interacts with NEDD4 and NEDD4L. Post-translationally, ubiquitinated by NEDD4L in the presence of albumin; which promotes endocytosis and proteasomal degradation. As to expression, kidney. Moderately expressed in aortic vascular smooth muscle and endothelial cells, and at a slightly higher level in the coronary vascular smooth muscle.

It localises to the golgi apparatus membrane. It is found in the endosome membrane. The protein localises to the cell membrane. The enzyme catalyses 2 chloride(in) + H(+)(out) = 2 chloride(out) + H(+)(in). Functionally, proton-coupled chloride transporter. Functions as antiport system and exchanges chloride ions against protons. Important for normal acidification of the endosome lumen. May play an important role in renal tubular function. The CLC channel family contains both chloride channels and proton-coupled anion transporters that exchange chloride or another anion for protons. The absence of conserved gating glutamate residues is typical for family members that function as channels. The chain is H(+)/Cl(-) exchange transporter 5 from Homo sapiens (Human).